Here is a 2346-residue protein sequence, read N- to C-terminus: Highly reducing polyketide synthase claI (2346 aa).

A Ketosynthase family 3 (KS3) domain is found at 10–412 (TPAIAVVGMA…GTNCHLIVED (403 aa)). Catalysis depends on for beta-ketoacyl synthase activity residues C183, H295, and H335. The interval 530–842 (IFTGQGSQWP…EYFSALKRGE (313 aa)) is malonyl-CoA:ACP transacylase (MAT) domain. The active-site For malonyltransferase activity is the S622. An N-terminal hotdog fold region spans residues 912–1048 (HDLLGSKILG…GLIRTSEEDS (137 aa)). The segment at 912–1213 (HDLLGSKILG…INGLRFSSVD (302 aa)) is dehydratase (DH) domain. The PKS/mFAS DH domain occupies 912 to 1218 (HDLLGSKILG…FSSVDLGSVQ (307 aa)). H944 functions as the Proton acceptor; for dehydratase activity in the catalytic mechanism. The segment at 1060–1218 (IHATPAQVWY…FSSVDLGSVQ (159 aa)) is C-terminal hotdog fold. Residue D1124 is the Proton donor; for dehydratase activity of the active site. The tract at residues 1633 to 1946 (GSLEALQWTQ…SARHIGKILI (314 aa)) is enoyl reductase (ER) domain. The ketoreductase (KR) domain stretch occupies residues 1972-2151 (TYLIVGGLRG…HSLDLGVVDA (180 aa)). One can recognise a Carrier domain in the interval 2258-2336 (SQLVEKAVTL…ALAEKMVSKV (79 aa)). At S2296 the chain carries O-(pantetheine 4'-phosphoryl)serine.

It depends on pantetheine 4'-phosphate as a cofactor.

Its pathway is secondary metabolite biosynthesis. Its function is as follows. Highly reducing polyketide synthase; part of the cla gene cluster that produces clavatol and ortho-quinone methide. The clavatol biosynthesis cluster cla and the terrestric acid cluster tra are both involved in the production of peniphenones and penilactones. The non-reducing PKS claF is responsible for the formation of clavatol from successive condensations of 3 malonyl-CoA units, presumably with a simple acetyl-CoA starter unit, and 2 methylation steps. The esterase claE probably collaborates with claF by catalyzing the hydrolysis of ACP-bound acyl intermediates to free the ACP from stalled intermediates. The clavatol oxidase claD then converts clavatol to hydroxyclavatol. Spontaneous dehydration of hydroxyclavatol leads to the accumulation of the highly active ortho-quinone methide. On the other hand, the PKS-NRPS hybrid traA is involved in the formation of crustosic acid, with the help of traB and traD. The polyketide synthase module (PKS) of traA is responsible for the synthesis of the polyketide backbone via the condensation of an acetyl-CoA starter unit with 3 malonyl-CoA units. The downstream nonribosomal peptide synthetase (NRPS) module then amidates the carboxyl end of the polyketide with L-malic acid. Because traA lacks a designated enoylreductase (ER) domain, the required activity is provided the enoyl reductase traG. Crustosic acid undergoes decarboxylation and isomerization to the terrestric acid, catalyzed by the 2-oxoglutarate-dependent dioxygenase traH. Both acids are further converted to the 2 gamma-butyrolactones (R)-5-methyltetronic acid and (S)-5-carboxylmethyltetronic acid, with involvement of the cytochrome P450 monooxygenase claJ. Spontaneous addition of the methide to these gamma-butyrolactones leads to peniphenone D and penilactone D, which undergo again stereospecific attacking by methide to give penilactones A and B. The function of the highly reducing polyketide synthase claI has not been investigated yet. The protein is Highly reducing polyketide synthase claI of Penicillium crustosum (Blue mold fungus).